The following is a 221-amino-acid chain: ATP phosphoribosyltransferase (221 aa).

It belongs to the ATP phosphoribosyltransferase family. Short subfamily. As to quaternary structure, heteromultimer composed of HisG and HisZ subunits.

The protein resides in the cytoplasm. The catalysed reaction is 1-(5-phospho-beta-D-ribosyl)-ATP + diphosphate = 5-phospho-alpha-D-ribose 1-diphosphate + ATP. The protein operates within amino-acid biosynthesis; L-histidine biosynthesis; L-histidine from 5-phospho-alpha-D-ribose 1-diphosphate: step 1/9. Functionally, catalyzes the condensation of ATP and 5-phosphoribose 1-diphosphate to form N'-(5'-phosphoribosyl)-ATP (PR-ATP). Has a crucial role in the pathway because the rate of histidine biosynthesis seems to be controlled primarily by regulation of HisG enzymatic activity. In Neisseria gonorrhoeae (strain ATCC 700825 / FA 1090), this protein is ATP phosphoribosyltransferase.